The sequence spans 430 residues: Enolase (430 aa).

Gln163 contacts (2R)-2-phosphoglycerate. Catalysis depends on Glu205, which acts as the Proton donor. Positions 242, 287, and 314 each coordinate Mg(2+). Residues Lys339, Arg368, Ser369, and Lys390 each contribute to the (2R)-2-phosphoglycerate site. The active-site Proton acceptor is the Lys339.

This sequence belongs to the enolase family. It depends on Mg(2+) as a cofactor.

The protein localises to the cytoplasm. It is found in the secreted. The protein resides in the cell surface. It catalyses the reaction (2R)-2-phosphoglycerate = phosphoenolpyruvate + H2O. The protein operates within carbohydrate degradation; glycolysis; pyruvate from D-glyceraldehyde 3-phosphate: step 4/5. Catalyzes the reversible conversion of 2-phosphoglycerate (2-PG) into phosphoenolpyruvate (PEP). It is essential for the degradation of carbohydrates via glycolysis. This chain is Enolase, found in Exiguobacterium sp. (strain ATCC BAA-1283 / AT1b).